A 428-amino-acid chain; its full sequence is uncharacterized protein (428 aa).

This is an uncharacterized protein from Treponema pallidum (strain Nichols).